Reading from the N-terminus, the 289-residue chain is uncharacterized protein (289 aa).

Residues 80–96 (PLNESRTSFKNIPQSRN) are compositionally biased toward polar residues. Disordered regions lie at residues 80–101 (PLNE…PRDY) and 136–157 (PREN…RMRE).

This is an uncharacterized protein from Acanthamoeba polyphaga (Amoeba).